Reading from the N-terminus, the 283-residue chain is MSFFDIEAQSSKGNSQQEPQFSTNQKTKELSNLIETFAEQSRVLEKECTKIGSKRDSKELRYKIETELIPNCTSVRDKIESNILIHQNGKLSADFKNLKTKYQSLQQSYNQRKSLFPLKTPISPGTSKERKDIHPRTEAVRQDPESSYISIKVNEQSPLLHNEGQHQLQLQEEQEQQQQGLSQEELDFQTIIHQERSQQIGRIHTAVQEVNAIFHQLGSLVKEQGEQVTTIDENISHLHDNMQNANKQLTRADQHQRDRNKCGKVTLIIIIVVCMVVLLAVLS.

The disordered stretch occupies residues 1–26; the sequence is MSFFDIEAQSSKGNSQQEPQFSTNQK. Topologically, residues 1 to 261 are cytoplasmic; it reads MSFFDIEAQS…ADQHQRDRNK (261 aa). Residues 8–25 are compositionally biased toward polar residues; sequence AQSSKGNSQQEPQFSTNQ. Coiled coils occupy residues 28–48 and 84–111; these read KELS…EKEC and LIHQ…SYNQ. Disordered stretches follow at residues 116–146 and 162–182; these read FPLK…DPES and NEGQ…QGLS. A compositionally biased stretch (basic and acidic residues) spans 127–144; the sequence is SKERKDIHPRTEAVRQDP. Residues 169–189 are a coiled coil; that stretch reads QLQEEQEQQQQGLSQEELDFQ. In terms of domain architecture, t-SNARE coiled-coil homology spans 190 to 252; the sequence is TIIHQERSQQ…QNANKQLTRA (63 aa). The chain crosses the membrane as a helical; Anchor for type IV membrane protein span at residues 262–282; the sequence is CGKVTLIIIIVVCMVVLLAVL. A topological domain (vacuolar) is located at residue Ser283.

This sequence belongs to the syntaxin family. Associates with VAM7.

The protein resides in the vacuole membrane. In terms of biological role, required for vacuolar assembly. Provides the t-SNARE function in a late step of the vacuolar assembly. Required for homotypic vacuole membrane fusion, autophagy and fusion of biosynthetic transport vesicles with the vacuole. Required for the delivery of alpha-factor receptor-ligand complexes to the vacuole. This is Syntaxin VAM3 (VAM3) from Saccharomyces cerevisiae (strain ATCC 204508 / S288c) (Baker's yeast).